We begin with the raw amino-acid sequence, 94 residues long: Large ribosomal subunit protein bL27 (94 aa).

A propeptide spanning residues 1 to 10 (MQFLFNIQLF) is cleaved from the precursor.

It belongs to the bacterial ribosomal protein bL27 family. Post-translationally, the N-terminus is cleaved by ribosomal processing cysteine protease Prp.

This Fusobacterium nucleatum subsp. nucleatum (strain ATCC 25586 / DSM 15643 / BCRC 10681 / CIP 101130 / JCM 8532 / KCTC 2640 / LMG 13131 / VPI 4355) protein is Large ribosomal subunit protein bL27.